We begin with the raw amino-acid sequence, 440 residues long: UDP-N-acetylmuramoylalanine--D-glutamate ligase (440 aa).

128–134 (GTNGKTT) is an ATP binding site.

This sequence belongs to the MurCDEF family.

The protein resides in the cytoplasm. The catalysed reaction is UDP-N-acetyl-alpha-D-muramoyl-L-alanine + D-glutamate + ATP = UDP-N-acetyl-alpha-D-muramoyl-L-alanyl-D-glutamate + ADP + phosphate + H(+). It functions in the pathway cell wall biogenesis; peptidoglycan biosynthesis. Functionally, cell wall formation. Catalyzes the addition of glutamate to the nucleotide precursor UDP-N-acetylmuramoyl-L-alanine (UMA). This chain is UDP-N-acetylmuramoylalanine--D-glutamate ligase, found in Lawsonia intracellularis (strain PHE/MN1-00).